The sequence spans 214 residues: GTP-binding nuclear protein GSP1 (214 aa).

In terms of domain architecture, Small GTPase Ran-type spans Arg-4 to Arg-172. Residue Gly-17 to Thr-22 coordinates GTP. The segment at Lys-34–Ala-42 is switch-I. GTP is bound by residues Gly-66, Asn-121–Asp-124, and Ser-151–Lys-153. The switch-II stretch occupies residues Gly-66 to Ser-82.

Belongs to the small GTPase superfamily. Ran family. In terms of assembly, found in a nuclear export complex with RanGTP, exportin and pre-miRNA.

The protein resides in the nucleus. Its function is as follows. GTP-binding protein involved in nucleocytoplasmic transport. Required for the import of protein into the nucleus and also for RNA export. This chain is GTP-binding nuclear protein GSP1 (GSP1), found in Encephalitozoon cuniculi (strain GB-M1) (Microsporidian parasite).